Consider the following 291-residue polypeptide: MTQLSAAQTPQPKPADGNRALYGGKINRRITVRDITAAKERGEKWPMLTAYDAMTASVFDESGIPVMLVGDSAGNCHLGYETTVPVTLDEMTMLSAAVVRGTSRALIVGDLPFGSYQEGPVQALRSATRLVKEAGVGAVKLEGGERSHRQIELLVESGIPVMAHIGLTPQSVNSMGYRVQGRGEEAAQQLLRDAKAVQDAGAFAVVLELVPAELAAEVTRTLHIPTVGIGAGPDTDAQVLVWTDMLGLTGGRMPKFVKQYADLRKVMGDAAKAYAEDVVGGTFPADEHSVH.

The span at Met-1–Pro-10 shows a compositional bias: polar residues. Residues Met-1–Ala-20 form a disordered region. Mg(2+) contacts are provided by Asp-71 and Asp-110. Residues Asp-71–Ser-72, Asp-110, and Lys-140 each bind 3-methyl-2-oxobutanoate. Glu-142 is a binding site for Mg(2+). The Proton acceptor role is filled by Glu-208.

Belongs to the PanB family. As to quaternary structure, homodecamer; pentamer of dimers. Mg(2+) serves as cofactor.

It is found in the cytoplasm. The enzyme catalyses 3-methyl-2-oxobutanoate + (6R)-5,10-methylene-5,6,7,8-tetrahydrofolate + H2O = 2-dehydropantoate + (6S)-5,6,7,8-tetrahydrofolate. Its pathway is cofactor biosynthesis; (R)-pantothenate biosynthesis; (R)-pantoate from 3-methyl-2-oxobutanoate: step 1/2. Its function is as follows. Catalyzes the reversible reaction in which hydroxymethyl group from 5,10-methylenetetrahydrofolate is transferred onto alpha-ketoisovalerate to form ketopantoate. This chain is 3-methyl-2-oxobutanoate hydroxymethyltransferase, found in Streptomyces coelicolor (strain ATCC BAA-471 / A3(2) / M145).